The sequence spans 159 residues: Insulin-like peptide 7 (159 aa).

The first 31 residues, 1-31 (MTRMIIQNSGSWTLCGAVLLFVLPLIPTPEA), serve as a signal peptide directing secretion. 3 disulfide bridges follow: Cys63–Cys136, Cys75–Cys150, and Cys135–Cys141. Residues 90 to 121 (TGNDEAWIKKTTTEPDGSTWLHVNYANMFLRS) constitute a propeptide, connecting peptide.

Belongs to the insulin family. Heterodimer of a B chain and an A chain linked by two disulfide bonds. As to expression, broadly expressed at a low level throughout the embryo, except the yolk. Expressed at a moderate level in the embryonic midgut. Larval expression is restricted to ten cells of the ventral nerve cord - in four pairs of centrally located cells in the most posterior abdominal segments and in one pair of dorsally located cells in the A1 or A2 segments.

Its subcellular location is the secreted. Its function is as follows. Possible ligand of InR/insulin-like receptor. This Drosophila melanogaster (Fruit fly) protein is Insulin-like peptide 7.